The sequence spans 326 residues: Aspartate carbamoyltransferase catalytic subunit (326 aa).

Residues Arg-60 and Thr-61 each contribute to the carbamoyl phosphate site. L-aspartate is bound at residue Lys-88. Carbamoyl phosphate is bound by residues Arg-110, His-143, and Gln-146. L-aspartate contacts are provided by Arg-183 and Arg-239. 2 residues coordinate carbamoyl phosphate: Gly-280 and Pro-281.

It belongs to the aspartate/ornithine carbamoyltransferase superfamily. ATCase family. Heterododecamer (2C3:3R2) of six catalytic PyrB chains organized as two trimers (C3), and six regulatory PyrI chains organized as three dimers (R2).

It catalyses the reaction carbamoyl phosphate + L-aspartate = N-carbamoyl-L-aspartate + phosphate + H(+). The protein operates within pyrimidine metabolism; UMP biosynthesis via de novo pathway; (S)-dihydroorotate from bicarbonate: step 2/3. Functionally, catalyzes the condensation of carbamoyl phosphate and aspartate to form carbamoyl aspartate and inorganic phosphate, the committed step in the de novo pyrimidine nucleotide biosynthesis pathway. The chain is Aspartate carbamoyltransferase catalytic subunit from Microcystis aeruginosa (strain NIES-843 / IAM M-2473).